We begin with the raw amino-acid sequence, 347 residues long: GMP reductase (347 aa).

NADP(+) is bound at residue 108 to 131; it reads ADFEKTKQILDLNPALNFVCIDVA. 2 residues coordinate K(+): G181 and G183. The active-site Thioimidate intermediate is the C186. Residue 216–239 coordinates NADP(+); the sequence is IVSDGGCTTPGDVAKAFGGGADFV.

It belongs to the IMPDH/GMPR family. GuaC type 1 subfamily. Homotetramer.

The catalysed reaction is IMP + NH4(+) + NADP(+) = GMP + NADPH + 2 H(+). Functionally, catalyzes the irreversible NADPH-dependent deamination of GMP to IMP. It functions in the conversion of nucleobase, nucleoside and nucleotide derivatives of G to A nucleotides, and in maintaining the intracellular balance of A and G nucleotides. The chain is GMP reductase from Escherichia coli O7:K1 (strain IAI39 / ExPEC).